We begin with the raw amino-acid sequence, 324 residues long: MGPWGEPELLVWRPEAVASEPPVPVGLEVKLGALVLLLVLTLLCSLVPICVLRRPGANHEGSASRQKALSLVSCFAGGVFLATCLLDLLPDYLAAIDEALAALHVTLQFPLQEFILAMGFFLVLVMEQITLAYKEQSGPSPLEETRALLGTVNGGPQHWHDGPGVPQASGAPATPSALRACVLVFSLALHSVFEGLAVGLQRDRARAMELCLALLLHKGILAVSLSLRLLQSHLRAQVVAGCGILFSCMTPLGIGLGAALAESAGPLHQLAQSVLEGMAAGTFLYITFLEILPQELASSEQRILKVILLLAGFALLTGLLFIQI.

Residues 1–30 lie on the Extracellular side of the membrane; the sequence is MGPWGEPELLVWRPEAVASEPPVPVGLEVK. Residues 31 to 51 traverse the membrane as a helical segment; sequence LGALVLLLVLTLLCSLVPICV. The Cytoplasmic segment spans residues 52–68; that stretch reads LRRPGANHEGSASRQKA. A helical transmembrane segment spans residues 69-89; it reads LSLVSCFAGGVFLATCLLDLL. Topologically, residues 90–104 are extracellular; sequence PDYLAAIDEALAALH. A helical transmembrane segment spans residues 105–125; sequence VTLQFPLQEFILAMGFFLVLV. Over 126–179 the chain is Cytoplasmic; sequence MEQITLAYKEQSGPSPLEETRALLGTVNGGPQHWHDGPGVPQASGAPATPSALR. The helical transmembrane segment at 180–200 threads the bilayer; the sequence is ACVLVFSLALHSVFEGLAVGL. Over 201 to 206 the chain is Extracellular; the sequence is QRDRAR. Residues 207–227 form a helical membrane-spanning segment; sequence AMELCLALLLHKGILAVSLSL. The Cytoplasmic segment spans residues 228 to 237; that stretch reads RLLQSHLRAQ. The helical transmembrane segment at 238 to 258 threads the bilayer; that stretch reads VVAGCGILFSCMTPLGIGLGA. Over 259–272 the chain is Extracellular; it reads ALAESAGPLHQLAQ. A helical transmembrane segment spans residues 273–293; the sequence is SVLEGMAAGTFLYITFLEILP. Topologically, residues 294 to 303 are cytoplasmic; sequence QELASSEQRI. The helical transmembrane segment at 304-324 threads the bilayer; that stretch reads LKVILLLAGFALLTGLLFIQI.

Belongs to the ZIP transporter (TC 2.A.5) family. Ubiquitous. Expressed in most adult and fetal tissues including the epidermis.

The protein resides in the cell membrane. The protein localises to the endoplasmic reticulum membrane. It carries out the reaction Zn(2+)(in) = Zn(2+)(out). Its activity is regulated as follows. Inhibited by Ni(2+) ions. Fe(2+) ions do not inhibit zinc uptake. Functionally, transporter for the divalent cation Zn(2+). Mediates the influx of Zn(2+) into cells from extracellular space. Functions as the major importer of zinc from circulating blood plasma into prostate cells. In Homo sapiens (Human), this protein is Zinc transporter ZIP1.